The primary structure comprises 100 residues: C-X-C motif chemokine 3 (100 aa).

An N-terminal signal peptide occupies residues 1 to 31 (MAPPTCRLLSAALVLLLLLATNHQATGAVVA). 2 cysteine pairs are disulfide-bonded: C36–C62 and C38–C78.

It belongs to the intercrine alpha (chemokine CxC) family.

Its subcellular location is the secreted. In terms of biological role, ligand for CXCR2. Has chemotactic activity for neutrophils. May play a role in inflammation and exert its effects on endothelial cells in an autocrine fashion. This Mus musculus (Mouse) protein is C-X-C motif chemokine 3.